We begin with the raw amino-acid sequence, 458 residues long: MEFDTIAAISTALGEGAIAIVRVSGDDAVEKVNRIFKGKDLTEVPSHTIHYGHIVDLDTNQVIEEVMVSIMRAPRTFTRENIVEINCHGGLVSVNKVLQLILAQGVRLAEPGEFTKRAFLNGRIDLSQAEAVMDLIRAKTDRAMNVAINQMEGRLSKLIGRLRQDILETLAHVEVNIDYPEYDDVEEMTHNILIEKATHVRAEIAKILETSKQGKILREGIATAIIGRPNVGKSSLLNSLVQEKKAIVTDIAGTTRDVIEEYVNVRGVPLKLIDTAGIRETEDVVERIGVERSKEMMSQADLVLVVVNYSETLTNEDEELFRAVQGKDFIVIVNKTDLPQAIDMERVIELAAGNRVITTSLIEEQGIDELEKAIADLFFEGTIDSADVTYVSNARHIGLLTQAGKTIGDAIEAIENGVPIDMVQIDLTRTWEILGEITGDTVHESLIDQLFSQFCLGK.

Residues Arg22, Glu84, and Arg123 each coordinate (6S)-5-formyl-5,6,7,8-tetrahydrofolate. One can recognise a TrmE-type G domain in the interval 220-379 (GIATAIIGRP…LEKAIADLFF (160 aa)). A K(+)-binding site is contributed by Asn230. GTP is bound by residues 230–235 (NVGKSS), 249–255 (TDIAGTT), and 274–277 (DTAG). Ser234 provides a ligand contact to Mg(2+). Thr249, Ile251, and Thr254 together coordinate K(+). Thr255 lines the Mg(2+) pocket. Lys458 lines the (6S)-5-formyl-5,6,7,8-tetrahydrofolate pocket.

The protein belongs to the TRAFAC class TrmE-Era-EngA-EngB-Septin-like GTPase superfamily. TrmE GTPase family. In terms of assembly, homodimer. Heterotetramer of two MnmE and two MnmG subunits. The cofactor is K(+).

The protein resides in the cytoplasm. Functionally, exhibits a very high intrinsic GTPase hydrolysis rate. Involved in the addition of a carboxymethylaminomethyl (cmnm) group at the wobble position (U34) of certain tRNAs, forming tRNA-cmnm(5)s(2)U34. The chain is tRNA modification GTPase MnmE from Bacillus anthracis.